Consider the following 496-residue polypeptide: DNA-directed DNA/RNA polymerase mu (496 aa).

The interval 1–22 is disordered; that stretch reads MLPKRRRVRAGSPHSAVASSTP. A Phosphoserine modification is found at serine 12. Low complexity predominate over residues 12-22; the sequence is SPHSAVASSTP. In terms of domain architecture, BRCT spans 23–122; it reads PSVVRFPDVA…QPVPEEGRHH (100 aa). 2 residues coordinate Na(+): threonine 241 and valine 243. An involved in ssDNA binding region spans residues 323 to 332; that stretch reads RGKLQGHDVD. Residues aspartate 330, aspartate 332, and aspartate 420 each coordinate Mg(2+).

This sequence belongs to the DNA polymerase type-X family. Mg(2+) is required as a cofactor.

Its subcellular location is the nucleus. The enzyme catalyses DNA(n) + a 2'-deoxyribonucleoside 5'-triphosphate = DNA(n+1) + diphosphate. In terms of biological role, gap-filling polymerase involved in repair of DNA double-strand breaks by non-homologous end joining (NHEJ). Participates in immunoglobulin (Ig) light chain gene rearrangement in V(D)J recombination. The sequence is that of DNA-directed DNA/RNA polymerase mu (Polm) from Mus musculus (Mouse).